The primary structure comprises 237 residues: B3 domain-containing protein Os06g0194400 (237 aa).

2 disordered regions span residues 1–23 (MIEAESQMAEAASYEEQRRRQVE) and 38–82 (SAAV…LPEK). The segment at residues 139–230 (FVKPMLQSHV…KFKVYIIRAS (92 aa)) is a DNA-binding region (TF-B3).

Its subcellular location is the nucleus. This Oryza sativa subsp. japonica (Rice) protein is B3 domain-containing protein Os06g0194400.